The primary structure comprises 131 residues: M-zodatoxin-Lt8o (131 aa).

Residues Met1 to Ser20 form the signal peptide. Residues Lys21–Arg60 constitute a propeptide that is removed on maturation.

It belongs to the cationic peptide 06 (cytoinsectotoxin) family. In terms of tissue distribution, expressed by the venom gland.

It localises to the secreted. Insecticidal, cytolytic and antimicrobial peptide. Forms voltage-dependent, ion-permeable channels in membranes. At high concentration causes cell membrane lysis. The protein is M-zodatoxin-Lt8o (cit 1-14) of Lachesana tarabaevi (Spider).